Reading from the N-terminus, the 487-residue chain is UL37 immediate early glycoprotein (487 aa).

Positions 1-22 are cleaved as a signal peptide; the sequence is MSPVYVNLLGSVGLLAFWYFSY. A compositionally biased stretch (acidic residues) spans 83 to 107; sequence GEESVTEDTEREDTEEEREDEEEEN. The disordered stretch occupies residues 83–121; the sequence is GEESVTEDTEREDTEEEREDEEEENEARTPEVNPIDAEG. N-linked (GlcNAc...) asparagine; by host glycosylation is found at asparagine 206, asparagine 210, asparagine 219, asparagine 223, asparagine 242, asparagine 246, asparagine 275, asparagine 281, asparagine 294, asparagine 297, asparagine 306, asparagine 333, asparagine 337, asparagine 343, asparagine 379, asparagine 384, and asparagine 391. A helical transmembrane segment spans residues 433–459; the sequence is WALLSICTVAAGSIALLSLFCILLIGL.

It belongs to the immediate early glycoprotein family. As to quaternary structure, interacts with host BAX. Interacts with host RSAD2/viperin; this interaction results in RSAD2/viperin relocalization from the endoplasmic reticulum to the mitochondria, actin cytoskeleton disruption and enhancement of infection. Interacts with host PEX19; this interaction inhibits the peroxisomal-dependent antiviral signaling. Interacts with host CHCHD6; this interaction rewires mitochondria by engaging the conserved MICOS complex.

Its subcellular location is the host endoplasmic reticulum membrane. The protein resides in the host Golgi apparatus membrane. It is found in the host mitochondrion membrane. It localises to the host peroxisome. Multifunctional transmembrane protein that plays several key roles in viral replication. Rapidely traffics from the host endoplasmic reticulum to the outer mitochondrial membrane where it acts to inhibit host immune response, block apoptotic signaling, regulate calcium flux, and induce mitochondrial fragmentation. Sequesters proapoptotic BAX at the outer mitochondrial membrane and prevents cytochrome c release and subsequent initiation of the proapoptotic cascade. Also provoques a calcium efflux from host endoplasmic reticulum and F-actin cytoskeleton disruption. Participates in the increase of host mitochondrial biogenesis, thus promoting viral replication by efficient use of newly made mitochondria. Additionally, a subset of vMIA localizes to peroxisomes, causing fragmentation and blocking peroxisomal MAVS signaling. Mechanistically, inhibits host MAVS oligomerization at peroxisomes in a mitochondrial fission factors (MFF)-dependent manner and in mitochondria independently of mitochondrial fission factors. Plays an essential role in the trafficking of host viperin/RSAD2 from the endoplasmic reticulum to the viral assembly compartment via the mitochondria during viral infection as failure of viperin to localize to the mitochondria results in insufficient lipogenesis and thus reduces viral replication. In terms of biological role, may play a role in escape from the host antiviral response. This chain is UL37 immediate early glycoprotein (UL37), found in Human cytomegalovirus (strain AD169) (HHV-5).